Consider the following 244-residue polypeptide: tRNA pseudouridine synthase A (244 aa).

Aspartate 52 serves as the catalytic Nucleophile. Tyrosine 110 contributes to the substrate binding site.

This sequence belongs to the tRNA pseudouridine synthase TruA family. As to quaternary structure, homodimer.

It carries out the reaction uridine(38/39/40) in tRNA = pseudouridine(38/39/40) in tRNA. Formation of pseudouridine at positions 38, 39 and 40 in the anticodon stem and loop of transfer RNAs. This chain is tRNA pseudouridine synthase A, found in Caldicellulosiruptor saccharolyticus (strain ATCC 43494 / DSM 8903 / Tp8T 6331).